Reading from the N-terminus, the 802-residue chain is Xylanase/beta-glucanase (802 aa).

An N-terminal signal peptide occupies residues 1–31 (MKKSIFKRYAAAVGLMASVLMFTAVPTTSNA). The GH11 domain occupies 32-239 (ADDQKTGKVG…SNGSANVKSI (208 aa)). Residue glutamate 124 is the Nucleophile of the active site. Glutamate 226 functions as the Proton donor in the catalytic mechanism. The b stretch occupies residues 245–523 (IDIPDPEPIK…SYLEGHDPSK (279 aa)). One can recognise a CBM-cenC domain in the interval 258-404 (NGYYLKENFE…YMDGAYAGVK (147 aa)). Disordered regions lie at residues 414 to 436 (SQSVDPPVTEPTNPTNPTGPSVT) and 533 to 564 (TTTTTTTTTTTSKTTTTTTTTSPAMHGGYRDL). Low complexity-rich tracts occupy residues 419–436 (PPVTEPTNPTNPTGPSVT) and 533–553 (TTTTTTTTTTTSKTTTTTTTT). A Dockerin domain is found at 434 to 513 (SVTKWGDANC…LIRAISELPE (80 aa)). Positions 524-555 (TTTTTTRITTTTTTTTTTTTSKTTTTTTTTSP) are linker. Residues 556 to 792 (AMHGGYRDLG…WVTYNKNGVQ (237 aa)) form the GH16 domain. Glutamate 684 functions as the Nucleophile in the catalytic mechanism.

The protein in the N-terminal section; belongs to the glycosyl hydrolase 11 (cellulase G) family. This sequence in the C-terminal section; belongs to the glycosyl hydrolase 16 family.

The enzyme catalyses Endohydrolysis of (1-&gt;4)-beta-D-xylosidic linkages in xylans.. The catalysed reaction is Hydrolysis of (1-&gt;4)-beta-D-glucosidic linkages in beta-D-glucans containing (1-&gt;3)- and (1-&gt;4)-bonds.. The protein operates within glycan degradation; xylan degradation. Its function is as follows. Contains two catalytic domains with xylanase and endo-beta-1,3-1,4 glucanase activities. The sequence is that of Xylanase/beta-glucanase (xynD) from Ruminococcus flavefaciens.